A 180-amino-acid chain; its full sequence is Oligoribonuclease (180 aa).

In terms of domain architecture, Exonuclease spans 7–170; the sequence is LIWIDLEMTG…DDIRESIAEL (164 aa). The active site involves tyrosine 128.

This sequence belongs to the oligoribonuclease family.

Its subcellular location is the cytoplasm. Functionally, 3'-to-5' exoribonuclease specific for small oligoribonucleotides. This is Oligoribonuclease from Pseudomonas paraeruginosa (strain DSM 24068 / PA7) (Pseudomonas aeruginosa (strain PA7)).